The sequence spans 319 residues: Acetyl-coenzyme A carboxylase carboxyl transferase subunit alpha (319 aa).

The CoA carboxyltransferase C-terminal domain occupies 35–296 (NLDEEVQRLR…KAQLLADLAD (262 aa)).

The protein belongs to the AccA family. In terms of assembly, acetyl-CoA carboxylase is a heterohexamer composed of biotin carboxyl carrier protein (AccB), biotin carboxylase (AccC) and two subunits each of ACCase subunit alpha (AccA) and ACCase subunit beta (AccD).

The protein resides in the cytoplasm. The catalysed reaction is N(6)-carboxybiotinyl-L-lysyl-[protein] + acetyl-CoA = N(6)-biotinyl-L-lysyl-[protein] + malonyl-CoA. It participates in lipid metabolism; malonyl-CoA biosynthesis; malonyl-CoA from acetyl-CoA: step 1/1. Its function is as follows. Component of the acetyl coenzyme A carboxylase (ACC) complex. First, biotin carboxylase catalyzes the carboxylation of biotin on its carrier protein (BCCP) and then the CO(2) group is transferred by the carboxyltransferase to acetyl-CoA to form malonyl-CoA. The protein is Acetyl-coenzyme A carboxylase carboxyl transferase subunit alpha of Erwinia tasmaniensis (strain DSM 17950 / CFBP 7177 / CIP 109463 / NCPPB 4357 / Et1/99).